Here is a 102-residue protein sequence, read N- to C-terminus: Class II hydrophobin 3 (102 aa).

A signal peptide spans 1-16 (MQFLAVAALLFTTALA). 4 cysteine pairs are disulfide-bonded: cysteine 33/cysteine 83, cysteine 44/cysteine 74, cysteine 45/cysteine 57, and cysteine 84/cysteine 95.

This sequence belongs to the cerato-ulmin hydrophobin family. In terms of assembly, homotetramer. Further self-assembles to form highly ordered films at water-air interfaces through intermolecular interactions. Expressed in the conidia, vegetative growth and induction growth stages.

Its subcellular location is the secreted. It is found in the cell wall. It localises to the cytoplasm. Functionally, aerial growth, conidiation, and dispersal of filamentous fungi in the environment rely upon a capability of their secreting small amphipathic proteins called hydrophobins (HPBs) with low sequence identity. Class I can self-assemble into an outermost layer of rodlet bundles on aerial cell surfaces, conferring cellular hydrophobicity that supports fungal growth, development and dispersal; whereas Class II form highly ordered films at water-air interfaces through intermolecular interactions but contribute nothing to the rodlet structure. Hbf3 is a class II hydrophobin that has a role in vegetative growth and asexual development. The protein is Class II hydrophobin 3 of Hypocrea jecorina (strain QM6a) (Trichoderma reesei).